The primary structure comprises 238 residues: MTDEEKNLIENLFHRLKKTELNSPERDDAADELIQRLAKKQPTSSYYMAQTILIQETAIKKMSIELEELRKKIKILNREETNKKPSFLSNFFKKKSPSEIISNDNNILKKKENILPSNYSSSPISPTTQTSPVINNTRSSSFLGNALQTATGVAGGMILGNMLMNVFSHTKPEEDIFDTVKQSSSDEYTENNFLNNNTDNDLINYSYNESDINFRESSEESINNNVDDTDDIDNDNFI.

Residues 219 to 238 (EESINNNVDDTDDIDNDNFI) form a disordered region. Residues 227–238 (DDTDDIDNDNFI) are compositionally biased toward acidic residues.

This is an uncharacterized protein from Buchnera aphidicola subsp. Acyrthosiphon pisum (strain APS) (Acyrthosiphon pisum symbiotic bacterium).